Reading from the N-terminus, the 381-residue chain is Protein COS6 (381 aa).

The Cytoplasmic segment spans residues 1 to 42; sequence MKENELKNEKSVDVLSVKQLESQKTVLPQDLFRSSFTWFCYE. Residues 43-63 traverse the membrane as a helical segment; it reads IYKSLVFRIWMLLWLPLSVWW. The Extracellular segment spans residues 64-69; that stretch reads KLSNNW. The chain crosses the membrane as a helical span at residues 70–90; it reads IYPLMVSLLVLFWGPVFVLVI. At 91–381 the chain is on the cytoplasmic side; sequence FRLSRKRSLS…QLSCSEESLA (291 aa).

This sequence belongs to the DUP/COS family.

Its subcellular location is the membrane. The chain is Protein COS6 (COS6) from Saccharomyces cerevisiae (strain ATCC 204508 / S288c) (Baker's yeast).